The chain runs to 282 residues: Pantothenate synthetase (282 aa).

30-37 (MGYLHQGH) provides a ligand contact to ATP. The active-site Proton donor is His37. Position 61 (Gln61) interacts with (R)-pantoate. Gln61 is a binding site for beta-alanine. 147 to 150 (GQKD) is a binding site for ATP. Gln153 lines the (R)-pantoate pocket. ATP contacts are provided by residues Val176 and 184-187 (MSSR).

The protein belongs to the pantothenate synthetase family. In terms of assembly, homodimer.

The protein localises to the cytoplasm. It carries out the reaction (R)-pantoate + beta-alanine + ATP = (R)-pantothenate + AMP + diphosphate + H(+). It functions in the pathway cofactor biosynthesis; (R)-pantothenate biosynthesis; (R)-pantothenate from (R)-pantoate and beta-alanine: step 1/1. Catalyzes the condensation of pantoate with beta-alanine in an ATP-dependent reaction via a pantoyl-adenylate intermediate. The sequence is that of Pantothenate synthetase from Geotalea daltonii (strain DSM 22248 / JCM 15807 / FRC-32) (Geobacter daltonii).